The primary structure comprises 141 residues: Nucleoside diphosphate kinase (141 aa).

The ATP site is built by Lys-11, Phe-59, Arg-87, Thr-93, Arg-104, and Asn-114. His-117 (pros-phosphohistidine intermediate) is an active-site residue.

Belongs to the NDK family. Homotetramer. Mg(2+) is required as a cofactor.

Its subcellular location is the cytoplasm. It catalyses the reaction a 2'-deoxyribonucleoside 5'-diphosphate + ATP = a 2'-deoxyribonucleoside 5'-triphosphate + ADP. The enzyme catalyses a ribonucleoside 5'-diphosphate + ATP = a ribonucleoside 5'-triphosphate + ADP. Functionally, major role in the synthesis of nucleoside triphosphates other than ATP. The ATP gamma phosphate is transferred to the NDP beta phosphate via a ping-pong mechanism, using a phosphorylated active-site intermediate. The polypeptide is Nucleoside diphosphate kinase (Legionella pneumophila (strain Lens)).